The sequence spans 299 residues: Sulfate adenylyltransferase subunit 2 (299 aa).

Belongs to the PAPS reductase family. CysD subfamily. In terms of assembly, heterodimer composed of CysD, the smaller subunit, and CysN.

It catalyses the reaction sulfate + ATP + H(+) = adenosine 5'-phosphosulfate + diphosphate. The protein operates within sulfur metabolism; hydrogen sulfide biosynthesis; sulfite from sulfate: step 1/3. Functionally, with CysN forms the ATP sulfurylase (ATPS) that catalyzes the adenylation of sulfate producing adenosine 5'-phosphosulfate (APS) and diphosphate, the first enzymatic step in sulfur assimilation pathway. APS synthesis involves the formation of a high-energy phosphoric-sulfuric acid anhydride bond driven by GTP hydrolysis by CysN coupled to ATP hydrolysis by CysD. The chain is Sulfate adenylyltransferase subunit 2 from Colwellia psychrerythraea (strain 34H / ATCC BAA-681) (Vibrio psychroerythus).